The primary structure comprises 318 residues: Porphobilinogen deaminase (318 aa).

At Cys-241 the chain carries S-(dipyrrolylmethanemethyl)cysteine.

This sequence belongs to the HMBS family. Monomer. The cofactor is dipyrromethane.

It catalyses the reaction 4 porphobilinogen + H2O = hydroxymethylbilane + 4 NH4(+). Its pathway is porphyrin-containing compound metabolism; protoporphyrin-IX biosynthesis; coproporphyrinogen-III from 5-aminolevulinate: step 2/4. Tetrapolymerization of the monopyrrole PBG into the hydroxymethylbilane pre-uroporphyrinogen in several discrete steps. This Geobacter sulfurreducens (strain ATCC 51573 / DSM 12127 / PCA) protein is Porphobilinogen deaminase.